Consider the following 269-residue polypeptide: uncharacterized protein (269 aa).

Pro residues predominate over residues 1–16; the sequence is MTDVPSKPPQTTPPPK. Disordered regions lie at residues 1–110 and 157–269; these read MTDV…TISG and ILQQ…PTIQ. The span at 21–45 shows a compositional bias: polar residues; it reads APTTIFSSPPQLPDRSSLNISHTAS. Residues 46–58 show a composition bias toward low complexity; the sequence is TPTLTPTPLQQQQ. Polar residues predominate over residues 80-93; the sequence is SFSNSPNRQTQSFI. The span at 159–181 shows a compositional bias: low complexity; that stretch reads QQPQQSHSPQQQQQQHTPNHQQP. Polar residues predominate over residues 182–195; sequence LSPQQQKDLAQKRS. The span at 198–213 shows a compositional bias: pro residues; that stretch reads PLPPRPNKNRPLPTPI.

This is an uncharacterized protein from Dictyostelium discoideum (Social amoeba).